Here is a 245-residue protein sequence, read N- to C-terminus: Ribosomal RNA large subunit methyltransferase E (245 aa).

5 residues coordinate S-adenosyl-L-methionine: Gly-58, Trp-60, Asp-78, Asp-96, and Asp-123. The active-site Proton acceptor is Lys-163.

It belongs to the class I-like SAM-binding methyltransferase superfamily. RNA methyltransferase RlmE family.

The protein localises to the cytoplasm. It catalyses the reaction uridine(2552) in 23S rRNA + S-adenosyl-L-methionine = 2'-O-methyluridine(2552) in 23S rRNA + S-adenosyl-L-homocysteine + H(+). Specifically methylates the uridine in position 2552 of 23S rRNA at the 2'-O position of the ribose in the fully assembled 50S ribosomal subunit. This is Ribosomal RNA large subunit methyltransferase E from Methanocaldococcus jannaschii (strain ATCC 43067 / DSM 2661 / JAL-1 / JCM 10045 / NBRC 100440) (Methanococcus jannaschii).